The following is a 607-amino-acid chain: Elongation factor 4 (607 aa).

In terms of domain architecture, tr-type G spans 11-193; the sequence is SKIRNFSIIA…QIVEKVPAPT (183 aa). GTP-binding positions include 23 to 28 and 140 to 143; these read DHGKST and NKID.

The protein belongs to the TRAFAC class translation factor GTPase superfamily. Classic translation factor GTPase family. LepA subfamily.

The protein resides in the cell membrane. It carries out the reaction GTP + H2O = GDP + phosphate + H(+). Its function is as follows. Required for accurate and efficient protein synthesis under certain stress conditions. May act as a fidelity factor of the translation reaction, by catalyzing a one-codon backward translocation of tRNAs on improperly translocated ribosomes. Back-translocation proceeds from a post-translocation (POST) complex to a pre-translocation (PRE) complex, thus giving elongation factor G a second chance to translocate the tRNAs correctly. Binds to ribosomes in a GTP-dependent manner. In Bacillus cereus (strain ZK / E33L), this protein is Elongation factor 4.